The following is a 453-amino-acid chain: Bifunctional protein GlmU (453 aa).

The tract at residues 1–226 (MKFSAVILAA…PIEVEGVNDR (226 aa)) is pyrophosphorylase. UDP-N-acetyl-alpha-D-glucosamine contacts are provided by residues 8 to 11 (LAAG), Lys-22, Gln-73, 78 to 79 (GT), 100 to 102 (YGD), Gly-137, Glu-151, Asn-166, and Asn-224. Asp-102 provides a ligand contact to Mg(2+). Asn-224 is a binding site for Mg(2+). The linker stretch occupies residues 227 to 247 (AQLARLERAFQAAQAKKLLEQ). The tract at residues 248 to 453 (GVMLRDPARF…TGWQRPVKKK (206 aa)) is N-acetyltransferase. 2 residues coordinate UDP-N-acetyl-alpha-D-glucosamine: Arg-330 and Lys-348. Catalysis depends on His-360, which acts as the Proton acceptor. UDP-N-acetyl-alpha-D-glucosamine is bound by residues Tyr-363 and Asn-374. Acetyl-CoA contacts are provided by residues Ala-377, 383 to 384 (NY), Ser-402, Ala-420, and Arg-437.

In the N-terminal section; belongs to the N-acetylglucosamine-1-phosphate uridyltransferase family. It in the C-terminal section; belongs to the transferase hexapeptide repeat family. In terms of assembly, homotrimer. Mg(2+) serves as cofactor.

It localises to the cytoplasm. The enzyme catalyses alpha-D-glucosamine 1-phosphate + acetyl-CoA = N-acetyl-alpha-D-glucosamine 1-phosphate + CoA + H(+). It catalyses the reaction N-acetyl-alpha-D-glucosamine 1-phosphate + UTP + H(+) = UDP-N-acetyl-alpha-D-glucosamine + diphosphate. It functions in the pathway nucleotide-sugar biosynthesis; UDP-N-acetyl-alpha-D-glucosamine biosynthesis; N-acetyl-alpha-D-glucosamine 1-phosphate from alpha-D-glucosamine 6-phosphate (route II): step 2/2. It participates in nucleotide-sugar biosynthesis; UDP-N-acetyl-alpha-D-glucosamine biosynthesis; UDP-N-acetyl-alpha-D-glucosamine from N-acetyl-alpha-D-glucosamine 1-phosphate: step 1/1. The protein operates within bacterial outer membrane biogenesis; LPS lipid A biosynthesis. Catalyzes the last two sequential reactions in the de novo biosynthetic pathway for UDP-N-acetylglucosamine (UDP-GlcNAc). The C-terminal domain catalyzes the transfer of acetyl group from acetyl coenzyme A to glucosamine-1-phosphate (GlcN-1-P) to produce N-acetylglucosamine-1-phosphate (GlcNAc-1-P), which is converted into UDP-GlcNAc by the transfer of uridine 5-monophosphate (from uridine 5-triphosphate), a reaction catalyzed by the N-terminal domain. This is Bifunctional protein GlmU from Vibrio vulnificus (strain YJ016).